We begin with the raw amino-acid sequence, 237 residues long: Lectin (237 aa).

2 residues coordinate Mn(2+): Glu8 and Asp10. Positions 10, 12, 14, and 19 each coordinate Ca(2+). A carbohydrate is bound by residues Tyr12 and Asn14. Positions 19 and 24 each coordinate Mn(2+). 98-100 contributes to the a carbohydrate binding site; sequence GLY. A Ca(2+)-binding site is contributed by Asp208. 2 residues coordinate a carbohydrate: Gly227 and Arg228.

Belongs to the leguminous lectin family. As to quaternary structure, homotetramer; dimer of dimers. Post-translationally, concanavalin A-like lectins of the Diocleinae subtribe undergo proteolytic processing referred to as circular permutation. The propeptide is split into an N-terminal and a C-terminal part, the gamma and beta chain, respectively. These are then religated in beta-gamma order to form the mature alpha chain. The beta and gamma chains can often be detected in cell extracts. Residues 1-118 of the mature chain, as displayed here, probably constitute the beta chain in the propeptide, residues 119-237 the gamma chain.

In terms of biological role, D-mannose/D-glucose-binding lectin with hemagglutinating activity towards rabbit and human erythrocytes. In rats, induces dose-dependent paw edema. Has low cytotoxicity against Artemisia sp. The polypeptide is Lectin (Macropsychanthus comosus (Sea purse)).